A 282-amino-acid chain; its full sequence is 4-diphosphocytidyl-2-C-methyl-D-erythritol kinase (282 aa).

Lys12 is an active-site residue. Residue 95–105 (PMGGGIGGGSS) coordinates ATP. Asp137 is a catalytic residue.

Belongs to the GHMP kinase family. IspE subfamily.

The catalysed reaction is 4-CDP-2-C-methyl-D-erythritol + ATP = 4-CDP-2-C-methyl-D-erythritol 2-phosphate + ADP + H(+). Its pathway is isoprenoid biosynthesis; isopentenyl diphosphate biosynthesis via DXP pathway; isopentenyl diphosphate from 1-deoxy-D-xylulose 5-phosphate: step 3/6. Its function is as follows. Catalyzes the phosphorylation of the position 2 hydroxy group of 4-diphosphocytidyl-2C-methyl-D-erythritol. The chain is 4-diphosphocytidyl-2-C-methyl-D-erythritol kinase from Pseudomonas paraeruginosa (strain DSM 24068 / PA7) (Pseudomonas aeruginosa (strain PA7)).